The sequence spans 312 residues: R2-like ligand binding oxidase (312 aa).

Positions 68, 101, and 104 each coordinate Mn(2+). The segment at residues 71-162 (VTQDIQPFMA…AAQVRASVTY (92 aa)) is a cross-link (3-(O4'-tyrosyl)-valine (Val-Tyr)). A Fe cation-binding site is contributed by Glu-101. The Fe cation site is built by Glu-167, Glu-202, and His-205.

It belongs to the ribonucleoside diphosphate reductase small chain family. R2-like ligand binding oxidase subfamily. As to quaternary structure, homodimer. Fe cation serves as cofactor. It depends on Mn(2+) as a cofactor.

In terms of biological role, probable oxidase that might be involved in lipid metabolism. In Mycolicibacterium vanbaalenii (strain DSM 7251 / JCM 13017 / BCRC 16820 / KCTC 9966 / NRRL B-24157 / PYR-1) (Mycobacterium vanbaalenii), this protein is R2-like ligand binding oxidase.